The chain runs to 155 residues: uncharacterized protein (155 aa).

The Macro domain maps to 1 to 155 (MIVKYIKGDI…IVIVDWEPLL (155 aa)).

This is an uncharacterized protein from Escherichia coli (Bacteriophage T4).